Reading from the N-terminus, the 72-residue chain is MPQAKVVLPAPNGLDEELMGLAIYKLNELGTLEGNEIGVYTAERPDNVPEDCPDNMVFLEFRASVIPYLGRR.

This chain is Gene 42 protein (42), found in Mycobacterium phage L5 (Mycobacteriophage L5).